Consider the following 255-residue polypeptide: tRNA pseudouridine synthase A (255 aa).

The active-site Nucleophile is the D43. Y94 serves as a coordination point for substrate.

Belongs to the tRNA pseudouridine synthase TruA family.

It catalyses the reaction uridine(38/39/40) in tRNA = pseudouridine(38/39/40) in tRNA. Its function is as follows. Formation of pseudouridine at positions 38, 39 and 40 in the anticodon stem and loop of transfer RNAs. This chain is tRNA pseudouridine synthase A, found in Pyrobaculum neutrophilum (strain DSM 2338 / JCM 9278 / NBRC 100436 / V24Sta) (Thermoproteus neutrophilus).